The following is a 553-amino-acid chain: MLTANFPWLSAIILLPLLASFLIPVIPDKEGKTVRWFALGVGLADFILMCYVFLQKYDLSNPNLQLVEKIDWVPQIGLSWAVSVDGISAPLVLLAGLVTTLSILAAWQVDRKPRLFYFLMLLLYAAQIGVFVAQDLLLFFLMWEIELIPVYLLVSIWGGQKRRYAATKFLLYTAAASIFILVAGLAMALYGGGAMTFDMAELGFKDYPLALELVLYAGLLIAFGVKLAIFPLHTWLPDAHGEASAPVSMILAGVLLKMGGYGLIRLNMGLLPDAHIYFAPILAILGVVNIIYGAFASFGQQNMKRRLAYSSVSHMGFVLLGIASFTDVGISGAMLQMLSHGLIAAVLFFLAGVTYDRTHTLALNEMGGIAQAMPKVFALFTAGAMASLALPGMSGFASEITVFIGVTSSDVYSQTFRVVTVFLASVGLILTPIYLLSMLRQVFYGDGSSCDITNILPNKSNEQAVCFGTSCVLPHESEYSDAKPREIFIAVSFLALIVAIGFYPQLATRIYDVKTVAVNSEVRQAYTEIAATRQNIYAETQPDVSAKVASIFQ.

Transmembrane regions (helical) follow at residues 6-26 (FPWL…IPVI), 34-54 (VRWF…YVFL), 87-107 (ISAP…LAAW), 115-135 (LFYF…VAQD), 136-156 (LLLF…LVSI), 169-189 (FLLY…AMAL), 210-230 (ALEL…LAIF), 244-264 (SAPV…YGLI), 276-296 (IYFA…GAFA), 312-332 (VSHM…GISG), 333-353 (AMLQ…LAGV), 376-396 (VFAL…MSGF), 418-438 (VVTV…LLSM), and 487-507 (IFIA…PQLA).

This sequence belongs to the complex I subunit 4 family.

The protein resides in the cellular thylakoid membrane. It carries out the reaction a plastoquinone + NADH + (n+1) H(+)(in) = a plastoquinol + NAD(+) + n H(+)(out). It catalyses the reaction a plastoquinone + NADPH + (n+1) H(+)(in) = a plastoquinol + NADP(+) + n H(+)(out). Its function is as follows. NDH-1 shuttles electrons from NAD(P)H, via FMN and iron-sulfur (Fe-S) centers, to quinones in the respiratory chain. The immediate electron acceptor for the enzyme in this species is believed to be plastoquinone. Couples the redox reaction to proton translocation (for every two electrons transferred, four hydrogen ions are translocated across the cytoplasmic membrane), and thus conserves the redox energy in a proton gradient. This chain is NAD(P)H-quinone oxidoreductase chain 4 2, found in Microcystis aeruginosa (strain NIES-843 / IAM M-2473).